The sequence spans 107 residues: Prostate collagen triple helix protein (107 aa).

Residues 47–107 (PLIPRTPGSP…PTSPLFPFCP (61 aa)) form a disordered region. A compositionally biased stretch (low complexity) spans 81–100 (VGPKGPMLPLGPSGPVGPTS).

As to expression, expressed in prostate and testis. Weakly or not expressed in other tissues. Overexpressed in prostate cancers.

The protein resides in the cytoplasm. May be involved in growth and survival of prostate cancer cells through the TAF-Ibeta pathway. In Homo sapiens (Human), this protein is Prostate collagen triple helix protein (PCOTH).